The primary structure comprises 371 residues: MSVKYGKFEMPHKITVDQESPESNFARYVAEPFERGFGHTIGNALRRMMLSSLEAPAIISVRVEGIPHEYMAIEGISEDMTNIILNFKGALLRKLPTEETPRDTRILTKVVEVTQDDLDRNQGQYCVTLQDVVQEGNFEIVNPELHLFTVTKPMRRQVDLRIAFGRGYVPSERHVVRDKTSDEILVDAAFSPVRLINYFIENTRVGQDTDFDRLIMEVTTDGRITPAEALSFAVQIGLKHFEVFNQFNNYALSFDEKDGDRNGDQDELMDKLSLGIDEIELSVRSANCLTGANIETLAELVCIPERRMLEFRNFGKKSLNEIKAKLHEMSLHLGMDLSRFGVSPDNVKDKIKQYREEKKKKKELVKHEDAK.

The tract at residues 1-248 (MSVKYGKFEM…KHFEVFNQFN (248 aa)) is alpha N-terminal domain (alpha-NTD). Positions 264–371 (DQDELMDKLS…KELVKHEDAK (108 aa)) are alpha C-terminal domain (alpha-CTD).

The protein belongs to the RNA polymerase alpha chain family. In terms of assembly, homodimer. The RNAP catalytic core consists of 2 alpha, 1 beta, 1 beta' and 1 omega subunit. When a sigma factor is associated with the core the holoenzyme is formed, which can initiate transcription.

The enzyme catalyses RNA(n) + a ribonucleoside 5'-triphosphate = RNA(n+1) + diphosphate. Its function is as follows. DNA-dependent RNA polymerase catalyzes the transcription of DNA into RNA using the four ribonucleoside triphosphates as substrates. The sequence is that of DNA-directed RNA polymerase subunit alpha from Protochlamydia amoebophila (strain UWE25).